The chain runs to 185 residues: MELLRQGEHLHSTSRSTLESKCRKYKLIMQNDGNLVLYIGSLKSQSDEYCLWSSASCGKGHGPYRLSMQEDGNLVIYDSRNSAIWASGTMGHGVRGHYSMKLRSSGQIVVYDKYKQILYSSKPCTRDHLLSLPCAKPSGHPQSAYPPQQPGYGYPAQPGYPPQPGYPPQHGYPPQHGYPQQPGYY.

The 123-residue stretch at 1–123 (MELLRQGEHL…YKQILYSSKP (123 aa)) folds into the Bulb-type lectin domain. Residues 138 to 185 (SGHPQSAYPPQQPGYGYPAQPGYPPQPGYPPQHGYPPQHGYPQQPGYY) form a disordered region. Over residues 141–157 (PQSAYPPQQPGYGYPAQ) the composition is skewed to low complexity. Repeat copies occupy residues 153–158 (GYPAQP), 159–164 (GYPPQP), 165–170 (GYPPQH), 171–176 (GYPPQH), and 177–182 (GYPQQP). The interval 153-182 (GYPAQPGYPPQPGYPPQHGYPPQHGYPQQP) is 5 X 6 AA tandem repeats of G-Y-P-X-Q-[PH]. The segment covering 158-171 (PGYPPQPGYPPQHG) has biased composition (pro residues). The segment covering 172–185 (YPPQHGYPQQPGYY) has biased composition (low complexity).

As to quaternary structure, homodimer in solution. In terms of processing, the N-terminus is blocked.

Its subcellular location is the golgi apparatus membrane. The protein resides in the endomembrane system. It is found in the cytoplasm. The protein localises to the cytoskeleton. May have a role in cell motility. It has high affinity for both G-actin and F-actin. Binds to vesicle membranes via mannose residues and, by way of its interaction with actin, links these membranes to the cytoskeleton. This chain is Comitin (comA), found in Dictyostelium discoideum (Social amoeba).